We begin with the raw amino-acid sequence, 479 residues long: Probable periplasmic serine endoprotease DegP-like (479 aa).

The first 27 residues, 1–27, serve as a signal peptide directing secretion; the sequence is MSMPSLKKYAAALFAVFLMGQSVAAHA. Active-site charge relay system residues include His118, Asp148, and Ser221. Residues 219-221 and 276-280 each bind substrate; these read GNS and LGVVI. PDZ domains are found at residues 265-356 and 362-468; these read LKAS…VREG and KVAV…LRQG. The segment at 368 to 390 is disordered; the sequence is MPADDGDEATNDAAPSAERSSNR.

The protein belongs to the peptidase S1C family.

It is found in the periplasm. The enzyme catalyses Acts on substrates that are at least partially unfolded. The cleavage site P1 residue is normally between a pair of hydrophobic residues, such as Val-|-Val.. Might be efficient in the degradation of transiently denatured and unfolded proteins which accumulate in the periplasm following stress conditions. The sequence is that of Probable periplasmic serine endoprotease DegP-like from Pseudomonas fulva (strain 12-X).